Consider the following 474-residue polypeptide: uncharacterized protein (474 aa).

Over residues 1–14 the composition is skewed to polar residues; the sequence is MGSRYPSHQLSNGL. The segment at 1–137 is disordered; that stretch reads MGSRYPSHQL…QSGGVTRQNS (137 aa). At S45 the chain carries Phosphoserine. 3 stretches are compositionally biased toward polar residues: residues 73–83, 97–113, and 125–137; these read RSGSFAGTAQS, SLASAGSVSMKKTNSGP, and SGPQSGGVTRQNS. S169 is modified (phosphoserine). The next 2 membrane-spanning stretches (helical) occupy residues 210–230 and 236–256; these read VLWLVVLIFIMGFLAGGFILG and ILLVVVAILFTVVAALFIWNI.

The protein resides in the membrane. This is an uncharacterized protein from Arabidopsis thaliana (Mouse-ear cress).